The chain runs to 88 residues: Phosphocarrier protein HPr (88 aa).

The HPr domain maps to 1 to 88 (MEKRDFHVVA…ETMKKEGLSE (88 aa)). His15 serves as the catalytic Pros-phosphohistidine intermediate. Residue Ser46 is modified to Phosphoserine; by HPrK/P.

Belongs to the HPr family.

The protein resides in the cytoplasm. Phosphorylation on Ser-46 inhibits the phosphoryl transfer from enzyme I to HPr. General (non sugar-specific) component of the phosphoenolpyruvate-dependent sugar phosphotransferase system (sugar PTS). This major carbohydrate active-transport system catalyzes the phosphorylation of incoming sugar substrates concomitantly with their translocation across the cell membrane. The phosphoryl group from phosphoenolpyruvate (PEP) is transferred to the phosphoryl carrier protein HPr by enzyme I. Phospho-HPr then transfers it to the PTS EIIA domain. Functionally, P-Ser-HPr interacts with the catabolite control protein A (CcpA), forming a complex that binds to DNA at the catabolite response elements cre, operator sites preceding a large number of catabolite-regulated genes. Thus, P-Ser-HPr is a corepressor in carbon catabolite repression (CCR), a mechanism that allows bacteria to coordinate and optimize the utilization of available carbon sources. P-Ser-HPr also plays a role in inducer exclusion, in which it probably interacts with several non-PTS permeases and inhibits their transport activity. This is Phosphocarrier protein HPr (ptsH) from Latilactobacillus sakei (Lactobacillus sakei).